The following is a 718-amino-acid chain: Methionine--tRNA ligase (718 aa).

Positions 27–37 match the 'HIGH' region motif; it reads PYANGQIHIGH. Residues C158, C161, C171, and C174 each coordinate Zn(2+). A 'KMSKS' region motif is present at residues 348-352; sequence KMSKS. K351 is an ATP binding site. A tRNA-binding domain is found at 612 to 718; it reads DFAKIDLRIA…SGAKPGMRVK (107 aa).

The protein belongs to the class-I aminoacyl-tRNA synthetase family. MetG type 1 subfamily. In terms of assembly, homodimer. The cofactor is Zn(2+).

The protein resides in the cytoplasm. It catalyses the reaction tRNA(Met) + L-methionine + ATP = L-methionyl-tRNA(Met) + AMP + diphosphate. In terms of biological role, is required not only for elongation of protein synthesis but also for the initiation of all mRNA translation through initiator tRNA(fMet) aminoacylation. In Burkholderia thailandensis (strain ATCC 700388 / DSM 13276 / CCUG 48851 / CIP 106301 / E264), this protein is Methionine--tRNA ligase.